We begin with the raw amino-acid sequence, 2359 residues long: Pre-mRNA-processing-splicing factor 8A (2359 aa).

A disordered region spans residues 1–54; sequence MWNNNDGMPLAPPGTGGSMMPPPPAAHPSYTALPPPSNPTPPVEPTPEEAEAKL. A compositionally biased stretch (pro residues) spans 33 to 45; it reads LPPPSNPTPPVEP. In terms of domain architecture, MPN spans 2127–2258; the sequence is TYIMPKNILK…LTSYKLTQTG (132 aa).

As to quaternary structure, interacts with CLO.

The protein localises to the nucleus. Functions as a scaffold that mediates the ordered assembly of spliceosomal proteins and snRNAs. Required for the assembly of the U4/U6-U5 tri-snRNP complex. Required for embryo development. Required for splicing efficiency of COOLAIR introns and usage of the proximal poly(A) site. COOLAIR is a set of long non-coding antisense transcripts produced at the FLOWERING LOCUS C (FLC). COOLAIR initiates just downstream of the major sense transcript poly(A) site and terminates either early or extends into the FLC promoter region. Splicing of COOLAIR by PRP8A is functionally important for FLC regulation. The protein is Pre-mRNA-processing-splicing factor 8A of Arabidopsis thaliana (Mouse-ear cress).